The sequence spans 366 residues: Nitronate monooxygenase (366 aa).

FMN-binding positions include asparagine 74, glutamine 181, glycine 186, glycine 223, and 242-245; that span reads QLGT.

It belongs to the nitronate monooxygenase family. NMO class I subfamily. FMN serves as cofactor.

It carries out the reaction 3 propionate 3-nitronate + 3 O2 + H2O = 3 3-oxopropanoate + 2 nitrate + nitrite + H2O2 + 3 H(+). In terms of biological role, nitronate monooxygenase that uses molecular oxygen to catalyze the oxidative denitrification of alkyl nitronates. Acts on propionate 3-nitronate (P3N), the presumed physiological substrate. Is likely involved in the degradation of P3N, that allows B.phytofirmans PsJN to grow on 3-nitropropionate/P3N as the sole source of nitrogen and carbon. Also probably functions in the detoxification of P3N, a metabolic poison produced by plants and fungi as a defense mechanism. Cannot oxidize nitroalkanes such as 3-nitropropionate, nitroethane, or 1-nitropropane. This Paraburkholderia phytofirmans (strain DSM 17436 / LMG 22146 / PsJN) (Burkholderia phytofirmans) protein is Nitronate monooxygenase.